A 327-amino-acid polypeptide reads, in one-letter code: Delta-aminolevulinic acid dehydratase (327 aa).

The Zn(2+) site is built by cysteine 119, cysteine 121, and cysteine 129. The Schiff-base intermediate with substrate role is filled by lysine 198. Arginine 208 and arginine 220 together coordinate 5-aminolevulinate. A Mg(2+)-binding site is contributed by glutamate 236. Lysine 251 functions as the Schiff-base intermediate with substrate in the catalytic mechanism. 5-aminolevulinate-binding residues include serine 277 and tyrosine 316.

Belongs to the ALAD family. In terms of assembly, homooctamer. Requires Zn(2+) as cofactor.

The enzyme catalyses 2 5-aminolevulinate = porphobilinogen + 2 H2O + H(+). The protein operates within porphyrin-containing compound metabolism; protoporphyrin-IX biosynthesis; coproporphyrinogen-III from 5-aminolevulinate: step 1/4. Catalyzes an early step in the biosynthesis of tetrapyrroles. Binds two molecules of 5-aminolevulinate per subunit, each at a distinct site, and catalyzes their condensation to form porphobilinogen. This chain is Delta-aminolevulinic acid dehydratase (hemB), found in Synechocystis sp. (strain ATCC 27184 / PCC 6803 / Kazusa).